A 359-amino-acid polypeptide reads, in one-letter code: GTPase Obg (359 aa).

One can recognise an Obg domain in the interval M1–L159. The OBG-type G domain maps to A160–E328. Residues G166–S173, F191–V195, D213–G216, N280–D283, and S309–I311 contribute to the GTP site. Mg(2+) is bound by residues S173 and T193.

This sequence belongs to the TRAFAC class OBG-HflX-like GTPase superfamily. OBG GTPase family. Monomer. Mg(2+) serves as cofactor.

It is found in the cytoplasm. In terms of biological role, an essential GTPase which binds GTP, GDP and possibly (p)ppGpp with moderate affinity, with high nucleotide exchange rates and a fairly low GTP hydrolysis rate. Plays a role in control of the cell cycle, stress response, ribosome biogenesis and in those bacteria that undergo differentiation, in morphogenesis control. This is GTPase Obg from Cyanothece sp. (strain PCC 7425 / ATCC 29141).